A 619-amino-acid polypeptide reads, in one-letter code: ATP-dependent zinc metalloprotease FtsH (619 aa).

The Cytoplasmic portion of the chain corresponds to 1–11 (MDKQSKFRIKT). Residues 12–32 (FFKKIIFFLIIFCFFYFFNFI) traverse the membrane as a helical segment. The Periplasmic segment spans residues 33–131 (KKTKKITHTT…FKNYKIYTVL (99 aa)). A helical transmembrane segment spans residues 132–152 (NFFYDYGFFLMIIIICWIFIF). At 153–619 (RKIASRSSES…FKEDFASILD (467 aa)) the chain is on the cytoplasmic side. 224-231 (GPPGTGKT) lines the ATP pocket. Histidine 447 lines the Zn(2+) pocket. The active site involves glutamate 448. Residues histidine 451 and aspartate 522 each coordinate Zn(2+).

It in the central section; belongs to the AAA ATPase family. The protein in the C-terminal section; belongs to the peptidase M41 family. In terms of assembly, homohexamer. Requires Zn(2+) as cofactor.

The protein resides in the cell inner membrane. Its function is as follows. Acts as a processive, ATP-dependent zinc metallopeptidase for both cytoplasmic and membrane proteins. Plays a role in the quality control of integral membrane proteins. This Karelsulcia muelleri (strain DMIN) (Sulcia muelleri) protein is ATP-dependent zinc metalloprotease FtsH.